The sequence spans 1036 residues: Lethal(2) giant larvae protein homolog 1 (1036 aa).

WD repeat units lie at residues 38–71 (SALA…FTGL), 78–119 (VTQM…GLSF), 139–175 (VTVV…GQTL), 199–233 (SLQG…DNVF), 239–271 (LESL…GSPP), 289–331 (AINK…ETLV), 339–373 (VIDF…VLDL), 395–473 (TCSA…YKLS), 517–592 (QKVA…RMLI), and 601–662 (TAVT…LRQS). A Phosphoserine modification is found at Ser662. Over residues 667 to 677 (RKSRVSGKKRT) the composition is skewed to basic residues. The interval 667 to 688 (RKSRVSGKKRTPAASSKLQEAN) is disordered. The segment covering 679-688 (AASSKLQEAN) has biased composition (polar residues). WD repeat units lie at residues 722–782 (VRCL…KEVQ), 791–843 (AIAV…VSAK), 848–901 (LTAH…VHYS), and 915–938 (VFTR…SLSA). A Phosphothreonine modification is found at Thr957. Ser964, Ser982, and Ser989 each carry phosphoserine. Residues 980 to 1002 (PESCEGSPSSAHSKRADTMEPPE) form a disordered region.

The protein belongs to the WD repeat L(2)GL family. As to quaternary structure, associated with nonmuscle myosin II heavy chain. Interacts with PRKCI/aPKC, PARD6B/Par-6 and PARD6A. Interacts with STX4A. Interacts with RAB10 (GDP-bound form); the interaction is direct and promotes RAB10 association with membranes and activation through competition with the Rab inhibitor GDI1. Interacts with DCAF1. In terms of processing, phosphorylated by PRKCI on at least one of the following Ser residues: Ser 654, Ser-658, Ser-662, Ser-669 and Ser-672. Phosphorylation is important for appropriated cell polarization.

Its subcellular location is the early endosome membrane. The protein localises to the golgi apparatus. The protein resides in the trans-Golgi network membrane. It is found in the golgi apparatus membrane. It localises to the cell projection. Its subcellular location is the axon. The protein localises to the cytoplasm. The protein resides in the cytoskeleton. Functionally, cortical cytoskeleton protein found in a complex involved in maintaining cell polarity and epithelial integrity. Involved in the regulation of mitotic spindle orientation, proliferation, differentiation and tissue organization of neuroepithelial cells. Involved in axonogenesis through RAB10 activation thereby regulating vesicular membrane trafficking toward the axonal plasma membrane. The protein is Lethal(2) giant larvae protein homolog 1 (Llgl1) of Mus musculus (Mouse).